The primary structure comprises 91 residues: Small ribosomal subunit protein bS18 (91 aa).

It belongs to the bacterial ribosomal protein bS18 family. In terms of assembly, part of the 30S ribosomal subunit. Forms a tight heterodimer with protein bS6.

In terms of biological role, binds as a heterodimer with protein bS6 to the central domain of the 16S rRNA, where it helps stabilize the platform of the 30S subunit. The chain is Small ribosomal subunit protein bS18 from Burkholderia vietnamiensis (strain G4 / LMG 22486) (Burkholderia cepacia (strain R1808)).